The sequence spans 118 residues: Small ribosomal subunit protein uS13 (118 aa).

The disordered stretch occupies residues 94 to 118; that stretch reads GLPVRGQRTKTNARTRKGPRKPIKK.

Belongs to the universal ribosomal protein uS13 family. As to quaternary structure, part of the 30S ribosomal subunit. Forms a loose heterodimer with protein S19. Forms two bridges to the 50S subunit in the 70S ribosome.

Located at the top of the head of the 30S subunit, it contacts several helices of the 16S rRNA. In the 70S ribosome it contacts the 23S rRNA (bridge B1a) and protein L5 of the 50S subunit (bridge B1b), connecting the 2 subunits; these bridges are implicated in subunit movement. Contacts the tRNAs in the A and P-sites. The protein is Small ribosomal subunit protein uS13 of Haemophilus ducreyi (strain 35000HP / ATCC 700724).